A 1850-amino-acid chain; its full sequence is Serine/threonine-protein kinase WNK (1850 aa).

Disordered regions lie at residues 1–108 (MPDS…NALE), 221–253 (QHSIFDRSRLNKIPPNTSLASSSSPSDAANNDK), and 272–309 (MVNDGPRTLTGDDMDKMVSEEERARKEQEKREEEEKAA). 2 stretches are compositionally biased toward low complexity: residues 16-26 (SSVSSTTASTT) and 234-251 (PPNTSLASSSSPSDAANN). Positions 284–309 (DMDKMVSEEERARKEQEKREEEEKAA) are enriched in basic and acidic residues. The Protein kinase domain occupies 334–596 (LKFDEELGRG…VKQLLVDDFF (263 aa)). Residues Ser-344, 416–419 (TELM), and Lys-466 each bind ATP. The Proton acceptor role is filled by Asp-483. A coiled-coil region spans residues 693–749 (DHRLLEIKRAKEEEERIREEAEIKEELRLRAEAKEKEKERLEKERLEKKAAAAAAAN). The span at 727 to 742 (EKEKERLEKERLEKKA) shows a compositional bias: basic and acidic residues. 7 disordered regions span residues 727 to 790 (EKEK…AQQP), 890 to 943 (TPAS…KRKS), 1040 to 1130 (EPPT…AAKP), 1188 to 1249 (SPVS…TPAI), 1588 to 1636 (GTHI…PSHS), 1721 to 1740 (ASLSLPASPPPNTEIPDNEG), and 1769 to 1850 (IIPS…IENV). Residues 751–760 (NPTPIPPTPA) show a composition bias toward pro residues. Positions 776-790 (STQTSAEIQQSAQQP) are enriched in polar residues. Positions 890 to 934 (TPASIASPSPAPSATDVASTTAPVTPAPTPTTTTDGGAAAASTTT) are enriched in low complexity. Residues 1062 to 1071 (PKIEIEKTPP) show a composition bias toward basic and acidic residues. The span at 1077–1101 (QEPNNVQVTNVRKVSQESNAESVQS) shows a compositional bias: polar residues. Positions 1188–1207 (SPVSHSLSSNSSPSATTHSN) are enriched in low complexity. A compositionally biased stretch (polar residues) spans 1208–1217 (MSSIQSTTSV). The segment covering 1771 to 1805 (PSSRQSVRSATSSSPSTPPSSSSAPPKSLSSPTKS) has biased composition (low complexity). Residues 1806-1820 (YVSHCSLSIGYGSTA) show a composition bias toward polar residues. The segment covering 1821 to 1832 (SSEQQQREPSPS) has biased composition (low complexity).

This sequence belongs to the protein kinase superfamily. Ser/Thr protein kinase family. WNK subfamily. Interacts with gck-3 (via C-terminus). It depends on Mg(2+) as a cofactor. As to expression, expressed in pharynx, nervous system, hypodermis, spermatheca, excretory cell and canal and body wall muscles.

It is found in the cytoplasm. The enzyme catalyses L-seryl-[protein] + ATP = O-phospho-L-seryl-[protein] + ADP + H(+). It carries out the reaction L-threonyl-[protein] + ATP = O-phospho-L-threonyl-[protein] + ADP + H(+). Activated in response to hyperosmotic stress: cell shrinkage promotes formation of a membraneless compartment that concentrates wnk-1 with its downstrem substrates. Serine/threonine-protein kinase component of the WNK3-SPAK/OSR1 kinase cascade, which plays an important role in the regulation of electrolyte homeostasis and regulatory volume increase in response to hyperosmotic stress. Wnk-1 mediates regulatory volume increase in response to hyperosmotic stress by acting as a molecular crowding sensor, which senses cell shrinkage and mediates formation of a membraneless compartment by undergoing liquid-liquid phase separation. The membraneless compartment concentrates wnk-1 with its substrates. Phosphorylates gck-3. Plays a role in osmotic stress responses during which it increases gpdh-1 translation, likely by phosphorylating gck-3. Essential for larval development and the tubular formation of the excretory canals. In Caenorhabditis elegans, this protein is Serine/threonine-protein kinase WNK.